Consider the following 591-residue polypeptide: 5'-nucleotidase domain-containing protein DDB_G0275467 (591 aa).

2 stretches are compositionally biased toward low complexity: residues 38–50 (STTTTSGIKSYST) and 68–78 (QHQQQQPQQHQ). The disordered stretch occupies residues 38-88 (STTTTSGIKSYSTHNRSNNDTHTSKSNTIDQHQQQQPQQHQNNDNKHLFTP). Catalysis depends on aspartate 165, which acts as the Nucleophile. Aspartate 165 and aspartate 167 together coordinate Mg(2+). Catalysis depends on aspartate 167, which acts as the Proton donor. Residue 305-313 (TAAVGKVHL) coordinates substrate. Position 450 (aspartate 450) interacts with Mg(2+).

The protein belongs to the 5'(3')-deoxyribonucleotidase family. The cofactor is Mg(2+).

In Dictyostelium discoideum (Social amoeba), this protein is 5'-nucleotidase domain-containing protein DDB_G0275467.